The following is a 122-amino-acid chain: Early nodulin-10 (122 aa).

An N-terminal signal peptide occupies residues 1-36 (MTCTLKSPPKMASFFLSSLVLMFIAALILLPQGLAA). Repeat copies occupy residues 45–49 (PPDSE), 51–55 (PPYRN), 58–62 (PPFAL), 68–72 (APIYK), 77–81 (PPIYN), 82–86 (PPIYE), 88–92 (PPTYK), 99–103 (PPPFQ), 106–110 (PPFYK), and 113–117 (PPSQK). The interval 45-117 (PPDSELPPYR…FYKQAPPSQK (73 aa)) is 10 X 5 AA approximate repeats of P-P-X-X-X. The tract at residues 90-122 (TYKPSKKRLPPPFQKLPPFYKQAPPSQKLPRVN) is disordered.

As to expression, root nodules. In early nodules, expressed only in the interior of the developing nodule with no expression in other nodule tissues, including meristem. In slightly older nodules, expressed in almost all cells of the central zone. In more mature nodules, expression is restricted to the invasion zone.

This chain is Early nodulin-10 (ENOD10), found in Medicago sativa (Alfalfa).